Reading from the N-terminus, the 202-residue chain is Probable molybdenum cofactor guanylyltransferase (202 aa).

GTP is bound by residues 9 to 11 (VAG), lysine 22, asparagine 50, aspartate 77, and aspartate 102. Residue aspartate 102 participates in Mg(2+) binding.

It belongs to the MobA family. The cofactor is Mg(2+).

The protein resides in the cytoplasm. The enzyme catalyses Mo-molybdopterin + GTP + H(+) = Mo-molybdopterin guanine dinucleotide + diphosphate. Functionally, transfers a GMP moiety from GTP to Mo-molybdopterin (Mo-MPT) cofactor (Moco or molybdenum cofactor) to form Mo-molybdopterin guanine dinucleotide (Mo-MGD) cofactor. This chain is Probable molybdenum cofactor guanylyltransferase, found in Natronomonas pharaonis (strain ATCC 35678 / DSM 2160 / CIP 103997 / JCM 8858 / NBRC 14720 / NCIMB 2260 / Gabara) (Halobacterium pharaonis).